The following is a 204-amino-acid chain: Glycerol-3-phosphate acyltransferase (204 aa).

Transmembrane regions (helical) follow at residues 12 to 32, 85 to 105, 117 to 137, 142 to 162, and 163 to 183; these read LVMGYLLGSLPSGYLAAHWLA, WQVAAGLAALAGHIWPVWLGW, MLLGISWPVGLACFGIFLTVL, IVSLSSIIAALSLPLLMILRF, and QGNSPPAYLAVAFAAMAMVVW.

Belongs to the PlsY family. In terms of assembly, probably interacts with PlsX.

Its subcellular location is the cell inner membrane. It carries out the reaction an acyl phosphate + sn-glycerol 3-phosphate = a 1-acyl-sn-glycero-3-phosphate + phosphate. The protein operates within lipid metabolism; phospholipid metabolism. In terms of biological role, catalyzes the transfer of an acyl group from acyl-phosphate (acyl-PO(4)) to glycerol-3-phosphate (G3P) to form lysophosphatidic acid (LPA). This enzyme utilizes acyl-phosphate as fatty acyl donor, but not acyl-CoA or acyl-ACP. The polypeptide is Glycerol-3-phosphate acyltransferase (Prochlorococcus marinus (strain MIT 9313)).